Consider the following 328-residue polypeptide: Tetraacyldisaccharide 4'-kinase (328 aa).

52 to 59 contributes to the ATP binding site; that stretch reads NAGGTGKT.

The protein belongs to the LpxK family.

The catalysed reaction is a lipid A disaccharide + ATP = a lipid IVA + ADP + H(+). The protein operates within glycolipid biosynthesis; lipid IV(A) biosynthesis; lipid IV(A) from (3R)-3-hydroxytetradecanoyl-[acyl-carrier-protein] and UDP-N-acetyl-alpha-D-glucosamine: step 6/6. In terms of biological role, transfers the gamma-phosphate of ATP to the 4'-position of a tetraacyldisaccharide 1-phosphate intermediate (termed DS-1-P) to form tetraacyldisaccharide 1,4'-bis-phosphate (lipid IVA). In Jannaschia sp. (strain CCS1), this protein is Tetraacyldisaccharide 4'-kinase.